We begin with the raw amino-acid sequence, 299 residues long: Protease HtpX homolog (299 aa).

2 helical membrane passes run 15–35 (ILLL…GYLF) and 39–59 (GLGG…SMIF). H143 is a Zn(2+) binding site. E144 is a catalytic residue. H147 lines the Zn(2+) pocket. 2 consecutive transmembrane segments (helical) span residues 158-178 (IAVA…RMMW) and 198-218 (IIML…ATLV). E227 lines the Zn(2+) pocket.

The protein belongs to the peptidase M48B family. It depends on Zn(2+) as a cofactor.

Its subcellular location is the cell membrane. The chain is Protease HtpX homolog from Streptococcus pneumoniae serotype 4 (strain ATCC BAA-334 / TIGR4).